The chain runs to 345 residues: Succinylglutamate desuccinylase (345 aa).

Zn(2+)-binding residues include H64, E67, and H161. E225 is a catalytic residue.

It belongs to the AspA/AstE family. Succinylglutamate desuccinylase subfamily. It depends on Zn(2+) as a cofactor.

It catalyses the reaction N-succinyl-L-glutamate + H2O = L-glutamate + succinate. It functions in the pathway amino-acid degradation; L-arginine degradation via AST pathway; L-glutamate and succinate from L-arginine: step 5/5. Its function is as follows. Transforms N(2)-succinylglutamate into succinate and glutamate. The chain is Succinylglutamate desuccinylase from Shewanella pealeana (strain ATCC 700345 / ANG-SQ1).